The sequence spans 187 residues: Large ribosomal subunit protein uL22 (187 aa).

Basic and acidic residues-rich tracts occupy residues 158 to 168 (TKATDESEQAK) and 178 to 187 (RQKEKMMRNE). Residues 158 to 187 (TKATDESEQAKKKLSKKKLQRQKEKMMRNE) form a disordered region.

This sequence belongs to the universal ribosomal protein uL22 family.

The protein is Large ribosomal subunit protein uL22 (RpL17) of Anopheles gambiae (African malaria mosquito).